Here is a 139-residue protein sequence, read N- to C-terminus: Putative pre-16S rRNA nuclease (139 aa).

It belongs to the YqgF nuclease family.

Its subcellular location is the cytoplasm. In terms of biological role, could be a nuclease involved in processing of the 5'-end of pre-16S rRNA. This is Putative pre-16S rRNA nuclease from Streptococcus pyogenes serotype M1.